Consider the following 295-residue polypeptide: Small ribosomal subunit protein uS2 (295 aa).

S2 is subject to N-acetylserine. S43 carries the phosphoserine modification. The residue at position 52 (K52) is an N6-acetyllysine. The interval 54–113 is interaction with PPP1R16B; sequence TWEKLLLAARAIVAIENPADVSVISSRNTGQRAVLKFAAATGATPIAGRFTPGTFTNQIQ. K89 is subject to N6-acetyllysine; alternate. A Glycyl lysine isopeptide (Lys-Gly) (interchain with G-Cter in SUMO2); alternate cross-link involves residue K89. Phosphothreonine is present on T97. 2 laminin-binding regions span residues 161 to 180 and 205 to 229; these read IPCN…MLAR and RDPE…EFQG. Over residues 214–227 the composition is skewed to basic and acidic residues; sequence EQAAAEKAVTKEEF. Residues 214 to 240 form a disordered region; that stretch reads EQAAAEKAVTKEEFQGEWTAPAPEFTA. [DE]-W-[ST] repeat units lie at residues 230-232, 247-249, 266-268, and 275-277; these read EWT and DWS. Positions 242-295 are laminin-binding; that stretch reads QPEVADWSEGVQVPSVPIQQFPTEDWSARPFTEDWSAAPTAQATEWVGTTSELS. Residues 263–295 are disordered; it reads PTEDWSARPFTEDWSAAPTAQATEWVGTTSELS. Positions 280–295 are enriched in polar residues; sequence PTAQATEWVGTTSELS.

This sequence belongs to the universal ribosomal protein uS2 family. Monomer (37LRP) and homodimer (67LR). Component of the small ribosomal subunit. Mature ribosomes consist of a small (40S) and a large (60S) subunit. The 40S subunit contains about 33 different proteins and 1 molecule of RNA (18S). The 60S subunit contains about 49 different proteins and 3 molecules of RNA (28S, 5.8S and 5S). Interacts with RPS21. Interacts with several laminins including at least LAMB1. Interacts with MDK. The mature dimeric form interacts with PPP1R16B (via its fourth ankyrin repeat). Interacts with PPP1CA only in the presence of PPP1R16B. In terms of processing, acylated. Acylation may be a prerequisite for conversion of the monomeric 37 kDa laminin receptor precursor (37LRP) to the mature dimeric 67 kDa laminin receptor (67LR), and may provide a mechanism for membrane association. Post-translationally, cleaved by stromelysin-3 (ST3) at the cell surface. Cleavage by stromelysin-3 may be a mechanism to alter cell-extracellular matrix interactions.

The protein localises to the cell membrane. Its subcellular location is the cytoplasm. It localises to the nucleus. Functionally, required for the assembly and/or stability of the 40S ribosomal subunit. Required for the processing of the 20S rRNA-precursor to mature 18S rRNA in a late step of the maturation of 40S ribosomal subunits. Also functions as a cell surface receptor for laminin. Plays a role in cell adhesion to the basement membrane and in the consequent activation of signaling transduction pathways. May play a role in cell fate determination and tissue morphogenesis. Also acts as a receptor for several other ligands, including the pathogenic prion protein, viruses, and bacteria. Acts as a PPP1R16B-dependent substrate of PPP1CA. The sequence is that of Small ribosomal subunit protein uS2 from Ovis aries (Sheep).